The following is a 609-amino-acid chain: Alpha-fetoprotein (609 aa).

An N-terminal signal peptide occupies residues Met1 to Ser18. Albumin domains lie at Arg19–Thr210, Lys211–Gln402, and Lys403–Ser601. His22 serves as a coordination point for Cu(2+). Intrachain disulfides connect Cys99–Cys114, Cys113–Cys124, Cys148–Cys193, Cys192–Cys201, Cys224–Cys270, Cys269–Cys277, Cys289–Cys303, and Cys302–Cys313. Residues Ser111 and Ser115 each carry the phosphoserine modification. Asn251 carries N-linked (GlcNAc...) asparagine glycosylation. Phosphoserine is present on Ser344. 7 disulfides stabilise this stretch: Cys384-Cys393, Cys416-Cys462, Cys461-Cys472, Cys485-Cys501, Cys500-Cys511, Cys538-Cys583, and Cys582-Cys591.

The protein belongs to the ALB/AFP/VDB family. As to quaternary structure, dimeric and trimeric forms have been found in addition to the monomeric form. In terms of processing, sulfated. Plasma.

The protein resides in the secreted. In terms of biological role, binds copper, nickel, and fatty acids as well as, and bilirubin less well than, serum albumin. The chain is Alpha-fetoprotein (AFP) from Equus caballus (Horse).